The chain runs to 186 residues: Ribosome-recycling factor (186 aa).

Composition is skewed to basic and acidic residues over residues 134–169 (RDAN…KKAE) and 176–186 (AKAREAEVMED). A disordered region spans residues 134–186 (RDANKAAETAEKDKEMTEDDRDKTKDQVQELTKKAETNVNESAKAREAEVMED).

Belongs to the RRF family.

It localises to the cytoplasm. Functionally, responsible for the release of ribosomes from messenger RNA at the termination of protein biosynthesis. May increase the efficiency of translation by recycling ribosomes from one round of translation to another. The protein is Ribosome-recycling factor of Rhodopirellula baltica (strain DSM 10527 / NCIMB 13988 / SH1).